Here is a 145-residue protein sequence, read N- to C-terminus: D-aminoacyl-tRNA deacylase (145 aa).

The short motif at 137–138 (GP) is the Gly-cisPro motif, important for rejection of L-amino acids element.

The protein belongs to the DTD family. In terms of assembly, homodimer.

It localises to the cytoplasm. It catalyses the reaction glycyl-tRNA(Ala) + H2O = tRNA(Ala) + glycine + H(+). The enzyme catalyses a D-aminoacyl-tRNA + H2O = a tRNA + a D-alpha-amino acid + H(+). In terms of biological role, an aminoacyl-tRNA editing enzyme that deacylates mischarged D-aminoacyl-tRNAs. Also deacylates mischarged glycyl-tRNA(Ala), protecting cells against glycine mischarging by AlaRS. Acts via tRNA-based rather than protein-based catalysis; rejects L-amino acids rather than detecting D-amino acids in the active site. By recycling D-aminoacyl-tRNA to D-amino acids and free tRNA molecules, this enzyme counteracts the toxicity associated with the formation of D-aminoacyl-tRNA entities in vivo and helps enforce protein L-homochirality. The chain is D-aminoacyl-tRNA deacylase from Klebsiella pneumoniae (strain 342).